A 205-amino-acid chain; its full sequence is Octanoyltransferase (205 aa).

The region spanning 30 to 205 is the BPL/LPL catalytic domain; it reads NSADELVWLL…ILKKEFYKIF (176 aa). Substrate is bound by residues 68–75, 140–142, and 153–155; these read RGGKHTYH, AFG, and GIA. Cys171 serves as the catalytic Acyl-thioester intermediate.

The protein belongs to the LipB family.

Its subcellular location is the cytoplasm. The catalysed reaction is octanoyl-[ACP] + L-lysyl-[protein] = N(6)-octanoyl-L-lysyl-[protein] + holo-[ACP] + H(+). Its pathway is protein modification; protein lipoylation via endogenous pathway; protein N(6)-(lipoyl)lysine from octanoyl-[acyl-carrier-protein]: step 1/2. Its function is as follows. Catalyzes the transfer of endogenously produced octanoic acid from octanoyl-acyl-carrier-protein onto the lipoyl domains of lipoate-dependent enzymes. Lipoyl-ACP can also act as a substrate although octanoyl-ACP is likely to be the physiological substrate. The chain is Octanoyltransferase from Wolbachia pipientis wMel.